The following is a 139-amino-acid chain: S-adenosyl-L-methionine-binding protein AF_0241 (139 aa).

The TsaA-like domain occupies 3–133; that stretch reads LKPIGVVKSP…YSPEIDCVNQ (131 aa). S-adenosyl-L-methionine contacts are provided by residues Gln16, 20–22, 58–59, Arg82, Leu92, and 113–116; these read PRQ, DK, and LDGS.

The protein belongs to the tRNA methyltransferase O family. As to quaternary structure, homodimer.

This Archaeoglobus fulgidus (strain ATCC 49558 / DSM 4304 / JCM 9628 / NBRC 100126 / VC-16) protein is S-adenosyl-L-methionine-binding protein AF_0241.